We begin with the raw amino-acid sequence, 246 residues long: Octanoyltransferase (246 aa).

In terms of domain architecture, BPL/LPL catalytic spans 54-240 (DPPPEAVWLL…CLEPNADAAI (187 aa)). Residues 96 to 103 (RGGEVTHH), 163 to 165 (AIG), and 176 to 178 (GVA) each bind substrate. Cys194 acts as the Acyl-thioester intermediate in catalysis.

The protein belongs to the LipB family.

Its subcellular location is the cytoplasm. The catalysed reaction is octanoyl-[ACP] + L-lysyl-[protein] = N(6)-octanoyl-L-lysyl-[protein] + holo-[ACP] + H(+). It participates in protein modification; protein lipoylation via endogenous pathway; protein N(6)-(lipoyl)lysine from octanoyl-[acyl-carrier-protein]: step 1/2. Its function is as follows. Catalyzes the transfer of endogenously produced octanoic acid from octanoyl-acyl-carrier-protein onto the lipoyl domains of lipoate-dependent enzymes. Lipoyl-ACP can also act as a substrate although octanoyl-ACP is likely to be the physiological substrate. The polypeptide is Octanoyltransferase (Synechococcus sp. (strain WH7803)).